Reading from the N-terminus, the 606-residue chain is Isocitrate dehydrogenase kinase/phosphatase (606 aa).

Residues 354–360 and Lys375 contribute to the ATP site; that span reads APGFKGT. Residue Asp414 is part of the active site.

This sequence belongs to the AceK family.

The protein resides in the cytoplasm. It catalyses the reaction L-seryl-[isocitrate dehydrogenase] + ATP = O-phospho-L-seryl-[isocitrate dehydrogenase] + ADP + H(+). In terms of biological role, bifunctional enzyme which can phosphorylate or dephosphorylate isocitrate dehydrogenase (IDH) on a specific serine residue. This is a regulatory mechanism which enables bacteria to bypass the Krebs cycle via the glyoxylate shunt in response to the source of carbon. When bacteria are grown on glucose, IDH is fully active and unphosphorylated, but when grown on acetate or ethanol, the activity of IDH declines drastically concomitant with its phosphorylation. The protein is Isocitrate dehydrogenase kinase/phosphatase of Rhodopseudomonas palustris (strain BisB5).